A 381-amino-acid polypeptide reads, in one-letter code: Cytochrome b (381 aa).

A run of 4 helical transmembrane segments spans residues Phe31 to Met51, Trp75 to Phe97, Val112 to Val132, and Phe178 to Ala198. Residues His81 and His95 each contribute to the heme b site. Residues His182 and His196 each coordinate heme b. His201 is a binding site for a ubiquinone. The next 4 membrane-spanning stretches (helical) occupy residues Phe224–Tyr244, Leu288–His308, Leu320–Gly340, and Tyr347–Pro367.

This sequence belongs to the cytochrome b family. As to quaternary structure, the main subunits of complex b-c1 are: cytochrome b, cytochrome c1 and the Rieske protein. Requires heme b as cofactor.

Its subcellular location is the mitochondrion inner membrane. Its function is as follows. Component of the ubiquinol-cytochrome c reductase complex (complex III or cytochrome b-c1 complex) that is part of the mitochondrial respiratory chain. The b-c1 complex mediates electron transfer from ubiquinol to cytochrome c. Contributes to the generation of a proton gradient across the mitochondrial membrane that is then used for ATP synthesis. This Chondrus crispus (Carrageen Irish moss) protein is Cytochrome b (MT-CYB).